Reading from the N-terminus, the 141-residue chain is uncharacterized protein (141 aa).

The protein belongs to the PhzA/PhzB family.

This is an uncharacterized protein from Pseudomonas aeruginosa (strain ATCC 15692 / DSM 22644 / CIP 104116 / JCM 14847 / LMG 12228 / 1C / PRS 101 / PAO1).